Reading from the N-terminus, the 647-residue chain is MIKITFPDGAVREFESGVTTFDIAESISKSLAKKALAGKFNDQLIDTTRAIEEDGSIEIVTPDHKDAYEVLRHSAAHLFAQAAKRLFPNLHLGVGPAIAEGFYYDTDNTEGQISNEDLPRIEAEMQKIVTENYPCIREEVTKEEALELFKDDPYKVELINEHAGAGLTVYRQGEFVDLCRGPHVPSTGRIQVFHLLNVAGAYWRGNSDNNMMQRIYGTAWFDKKDLKAYLTRLEEAKERDHRKLGKELDLFMISQEVGQGLPFWLPDGATIRRTLERYITDKELASGYQHVYTPPLASVELYKTSGHWDHYQEDMFPVMDMGDGEEFVLRPMNCPHHIQVYKNHVRSYRELPIRIAELGMMHRYEKSGALSGLQRVREMTLNDGHIFVTPEQIQEEFQRALQLIIDVYADFNLTDYRFRLSYRDPNDTHKYYDNDEMWENAQSMLKAALDEMGVDYFEAEGEAAFYGPKLDIQVKTALGNEETLSTIQLDFLLPERFDLKYIGADGEEHRPVMIHRGVISTMERFTAILIETYKGAFPTWLAPHQVTVIPISNEAHIDYAWEVAKTLRDRGVRADVDDRNEKMQYKIRASQTSKIPYQLIVGDKEMEEKSVNVRRYGSKATHTESVEEFVENILADIARKSRPDAQA.

The TGS domain occupies 1-61; the sequence is MIKITFPDGA…EEDGSIEIVT (61 aa). Residues 240–538 form a catalytic region; the sequence is DHRKLGKELD…LIETYKGAFP (299 aa). Zn(2+)-binding residues include Cys-334, His-385, and His-515.

This sequence belongs to the class-II aminoacyl-tRNA synthetase family. As to quaternary structure, homodimer. The cofactor is Zn(2+).

The protein localises to the cytoplasm. It catalyses the reaction tRNA(Thr) + L-threonine + ATP = L-threonyl-tRNA(Thr) + AMP + diphosphate + H(+). Catalyzes the attachment of threonine to tRNA(Thr) in a two-step reaction: L-threonine is first activated by ATP to form Thr-AMP and then transferred to the acceptor end of tRNA(Thr). Also edits incorrectly charged L-seryl-tRNA(Thr). The polypeptide is Threonine--tRNA ligase (Streptococcus pyogenes serotype M3 (strain ATCC BAA-595 / MGAS315)).